The following is a 1129-amino-acid chain: Serine/threonine-protein kinase 11-interacting protein (1129 aa).

LRR repeat units follow at residues 107 to 128, 130 to 150, 162 to 183, 185 to 206, 208 to 229, 232 to 253, 254 to 275, and 279 to 300; these read SLRS…RSVY, QLEV…IALC, VLHT…LELL, SLKI…LKVL, ELQY…SVGN, KLHS…ENLP, NLQH…SGLA, and NLKQ…RALT. Disordered regions lie at residues 335-392, 428-475, 654-678, and 696-724; these read RLQP…RRGQ, DPEY…HVAP, GDIY…NHTG, and NPTG…GLAA. Residues 337 to 355 are compositionally biased toward polar residues; sequence QPSSSATESSCTGDLTDSY. The span at 365–374 shows a compositional bias: basic residues; that stretch reads LPRKKSRVKV. Positions 381–391 are enriched in basic and acidic residues; it reads ERSDSEYERRG. The span at 436-447 shows a compositional bias: pro residues; sequence HSPPPRASPSPT. Over residues 448 to 458 the composition is skewed to low complexity; sequence APSSVPKQKSP.

Belongs to the STK11IP family.

The protein localises to the cytoplasm. This Xenopus tropicalis (Western clawed frog) protein is Serine/threonine-protein kinase 11-interacting protein (stk11ip).